A 425-amino-acid polypeptide reads, in one-letter code: UPF0761 membrane protein XCV0968 (425 aa).

Helical transmembrane passes span 48 to 68, 105 to 125, 154 to 174, 182 to 202, 216 to 236, and 250 to 270; these read VFALVPLAIVVFGVLSAFPAF, FTVAGMVALVASLLITLHSIE, GTMLAAASMAMAAYVFALPLF, LAEFAWRLAPMAVEFVCIVLI, ALPGALLAVILMEIVKWGFGF, and ALSALPILLLWIYLSWVSVLL.

This sequence belongs to the UPF0761 family.

The protein localises to the cell inner membrane. This chain is UPF0761 membrane protein XCV0968, found in Xanthomonas euvesicatoria pv. vesicatoria (strain 85-10) (Xanthomonas campestris pv. vesicatoria).